A 357-amino-acid polypeptide reads, in one-letter code: S-adenosylmethionine:tRNA ribosyltransferase-isomerase (357 aa).

The protein belongs to the QueA family. As to quaternary structure, monomer.

The protein resides in the cytoplasm. The catalysed reaction is 7-aminomethyl-7-carbaguanosine(34) in tRNA + S-adenosyl-L-methionine = epoxyqueuosine(34) in tRNA + adenine + L-methionine + 2 H(+). It participates in tRNA modification; tRNA-queuosine biosynthesis. Functionally, transfers and isomerizes the ribose moiety from AdoMet to the 7-aminomethyl group of 7-deazaguanine (preQ1-tRNA) to give epoxyqueuosine (oQ-tRNA). This Phenylobacterium zucineum (strain HLK1) protein is S-adenosylmethionine:tRNA ribosyltransferase-isomerase.